A 263-amino-acid chain; its full sequence is 4-hydroxy-tetrahydrodipicolinate reductase (263 aa).

Glycine 10 to methionine 15 serves as a coordination point for NAD(+). Residue arginine 38 coordinates NADP(+). NAD(+) contacts are provided by residues glycine 97–threonine 99 and alanine 123–phenylalanine 126. Histidine 153 functions as the Proton donor/acceptor in the catalytic mechanism. Residue histidine 154 coordinates (S)-2,3,4,5-tetrahydrodipicolinate. Lysine 157 acts as the Proton donor in catalysis. Glycine 163–threonine 164 is a binding site for (S)-2,3,4,5-tetrahydrodipicolinate.

The protein belongs to the DapB family.

Its subcellular location is the cytoplasm. It catalyses the reaction (S)-2,3,4,5-tetrahydrodipicolinate + NAD(+) + H2O = (2S,4S)-4-hydroxy-2,3,4,5-tetrahydrodipicolinate + NADH + H(+). The catalysed reaction is (S)-2,3,4,5-tetrahydrodipicolinate + NADP(+) + H2O = (2S,4S)-4-hydroxy-2,3,4,5-tetrahydrodipicolinate + NADPH + H(+). It functions in the pathway amino-acid biosynthesis; L-lysine biosynthesis via DAP pathway; (S)-tetrahydrodipicolinate from L-aspartate: step 4/4. Functionally, catalyzes the conversion of 4-hydroxy-tetrahydrodipicolinate (HTPA) to tetrahydrodipicolinate. The chain is 4-hydroxy-tetrahydrodipicolinate reductase from Dehalococcoides mccartyi (strain ATCC BAA-2266 / KCTC 15142 / 195) (Dehalococcoides ethenogenes (strain 195)).